The following is a 295-amino-acid chain: Farnesyl diphosphate synthase (295 aa).

3 residues coordinate isopentenyl diphosphate: lysine 46, arginine 49, and histidine 78. Mg(2+) is bound by residues aspartate 85 and aspartate 91. Arginine 96 contacts (2E)-geranyl diphosphate. Arginine 97 contributes to the isopentenyl diphosphate binding site. (2E)-geranyl diphosphate contacts are provided by lysine 180, threonine 181, glutamine 220, and lysine 237.

This sequence belongs to the FPP/GGPP synthase family. Mg(2+) serves as cofactor.

The protein resides in the cytoplasm. It catalyses the reaction isopentenyl diphosphate + (2E)-geranyl diphosphate = (2E,6E)-farnesyl diphosphate + diphosphate. This is Farnesyl diphosphate synthase (ispA) from Haemophilus influenzae (strain ATCC 51907 / DSM 11121 / KW20 / Rd).